The sequence spans 384 residues: Spermidine/putrescine import ATP-binding protein PotA (384 aa).

The ABC transporter domain maps to 6 to 238; sequence IAFKNVSKVF…PINHFVATFI (233 aa). Position 40–47 (40–47) interacts with ATP; it reads GASGSGKS.

This sequence belongs to the ABC transporter superfamily. Spermidine/putrescine importer (TC 3.A.1.11.1) family. As to quaternary structure, the complex is composed of two ATP-binding proteins (PotA), two transmembrane proteins (PotB and PotC) and a solute-binding protein (PotD).

It is found in the cell membrane. It carries out the reaction ATP + H2O + polyamine-[polyamine-binding protein]Side 1 = ADP + phosphate + polyamineSide 2 + [polyamine-binding protein]Side 1.. In terms of biological role, part of the ABC transporter complex PotABCD involved in spermidine/putrescine import. Responsible for energy coupling to the transport system. This chain is Spermidine/putrescine import ATP-binding protein PotA, found in Streptococcus agalactiae serotype Ia (strain ATCC 27591 / A909 / CDC SS700).